The primary structure comprises 354 residues: Transcription activator of gluconeogenesis ERT1-1 (354 aa).

The segment at 1-29 (MSFYPILRGPAKQESPPPPPAPKKRRKTA) is disordered. The zn(2)-C6 fungal-type DNA-binding region spans 32-60 (CLHCQKAHLTCDEGRPCARCIKKNMGDQC). Disordered regions lie at residues 71–111 (LVGL…FGSS) and 128–169 (DTSS…QGSP). The segment covering 81-98 (QATQQKQQQQQQQQQAVQ) has biased composition (low complexity). The span at 159-169 (SQTAGTPQGSP) shows a compositional bias: polar residues.

Belongs to the ERT1/acuK family.

Its subcellular location is the nucleus. Transcription factor which regulates nonfermentable carbon utilization. Activator of gluconeogenetic genes. This is Transcription activator of gluconeogenesis ERT1-1 (ERT1-1) from Yarrowia lipolytica (strain CLIB 122 / E 150) (Yeast).